We begin with the raw amino-acid sequence, 355 residues long: Peptide chain release factor 1 (355 aa).

Gln-229 carries the N5-methylglutamine modification. The tract at residues 280–299 (LDRERSAARKGQVGSGDRSE) is disordered.

Belongs to the prokaryotic/mitochondrial release factor family. Methylated by PrmC. Methylation increases the termination efficiency of RF1.

It localises to the cytoplasm. Its function is as follows. Peptide chain release factor 1 directs the termination of translation in response to the peptide chain termination codons UAG and UAA. The sequence is that of Peptide chain release factor 1 from Parvibaculum lavamentivorans (strain DS-1 / DSM 13023 / NCIMB 13966).